Reading from the N-terminus, the 339-residue chain is DNA-directed RNA polymerase subunit alpha (339 aa).

The interval 1 to 233 (MVREEVAGST…DLFLPFLHAE (233 aa)) is alpha N-terminal domain (alpha-NTD). The interval 264-339 (KKGIPLNCIF…IDLLKNKLSF (76 aa)) is alpha C-terminal domain (alpha-CTD).

It belongs to the RNA polymerase alpha chain family. As to quaternary structure, in plastids the minimal PEP RNA polymerase catalytic core is composed of four subunits: alpha, beta, beta', and beta''. When a (nuclear-encoded) sigma factor is associated with the core the holoenzyme is formed, which can initiate transcription.

It localises to the plastid. Its subcellular location is the chloroplast. The catalysed reaction is RNA(n) + a ribonucleoside 5'-triphosphate = RNA(n+1) + diphosphate. In terms of biological role, DNA-dependent RNA polymerase catalyzes the transcription of DNA into RNA using the four ribonucleoside triphosphates as substrates. The polypeptide is DNA-directed RNA polymerase subunit alpha (Elymus hystrix (Eastern bottlebrush grass)).